The following is a 528-amino-acid chain: Bifunctional purine biosynthesis protein PurH (528 aa).

Residues 2 to 149 (TDLAPLRRAL…KNHGFVSVVV (148 aa)) form the MGS-like domain.

It belongs to the PurH family.

The catalysed reaction is (6R)-10-formyltetrahydrofolate + 5-amino-1-(5-phospho-beta-D-ribosyl)imidazole-4-carboxamide = 5-formamido-1-(5-phospho-D-ribosyl)imidazole-4-carboxamide + (6S)-5,6,7,8-tetrahydrofolate. It carries out the reaction IMP + H2O = 5-formamido-1-(5-phospho-D-ribosyl)imidazole-4-carboxamide. It functions in the pathway purine metabolism; IMP biosynthesis via de novo pathway; 5-formamido-1-(5-phospho-D-ribosyl)imidazole-4-carboxamide from 5-amino-1-(5-phospho-D-ribosyl)imidazole-4-carboxamide (10-formyl THF route): step 1/1. The protein operates within purine metabolism; IMP biosynthesis via de novo pathway; IMP from 5-formamido-1-(5-phospho-D-ribosyl)imidazole-4-carboxamide: step 1/1. The protein is Bifunctional purine biosynthesis protein PurH of Roseobacter denitrificans (strain ATCC 33942 / OCh 114) (Erythrobacter sp. (strain OCh 114)).